The following is a 187-amino-acid chain: GTP cyclohydrolase 1 (187 aa).

Cys76, His79, and Cys148 together coordinate Zn(2+).

It belongs to the GTP cyclohydrolase I family. As to quaternary structure, toroid-shaped homodecamer, composed of two pentamers of five dimers.

It carries out the reaction GTP + H2O = 7,8-dihydroneopterin 3'-triphosphate + formate + H(+). The protein operates within cofactor biosynthesis; 7,8-dihydroneopterin triphosphate biosynthesis; 7,8-dihydroneopterin triphosphate from GTP: step 1/1. This chain is GTP cyclohydrolase 1, found in Streptococcus suis (strain 98HAH33).